Consider the following 664-residue polypeptide: Phosphomethylpyrimidine synthase (664 aa).

Polar residues-rich tracts occupy residues 1–10 and 17–27; these read MSTEPLSINP and SATQEPSTSSK. The tract at residues 1-37 is disordered; the sequence is MSTEPLSINPLSAKPLSATQEPSTSSKPSRREQRAAA. Substrate is bound by residues Asn-261, Met-290, Tyr-319, His-355, 375–377, 416–419, and Glu-455; these read SRG and DGLR. His-459 contributes to the Zn(2+) binding site. Tyr-482 contributes to the substrate binding site. His-523 contributes to the Zn(2+) binding site. 3 residues coordinate [4Fe-4S] cluster: Cys-603, Cys-606, and Cys-611.

It belongs to the ThiC family. As to quaternary structure, homodimer. Requires [4Fe-4S] cluster as cofactor.

The catalysed reaction is 5-amino-1-(5-phospho-beta-D-ribosyl)imidazole + S-adenosyl-L-methionine = 4-amino-2-methyl-5-(phosphooxymethyl)pyrimidine + CO + 5'-deoxyadenosine + formate + L-methionine + 3 H(+). The protein operates within cofactor biosynthesis; thiamine diphosphate biosynthesis. In terms of biological role, catalyzes the synthesis of the hydroxymethylpyrimidine phosphate (HMP-P) moiety of thiamine from aminoimidazole ribotide (AIR) in a radical S-adenosyl-L-methionine (SAM)-dependent reaction. The chain is Phosphomethylpyrimidine synthase from Pectobacterium atrosepticum (strain SCRI 1043 / ATCC BAA-672) (Erwinia carotovora subsp. atroseptica).